Reading from the N-terminus, the 455-residue chain is Bifunctional protein GlmU (455 aa).

Positions 1-227 (MKLKAIILAA…YEEIMAVNSR (227 aa)) are pyrophosphorylase. UDP-N-acetyl-alpha-D-glucosamine-binding positions include 8 to 11 (LAAG), lysine 22, glutamine 72, and 77 to 78 (GT). Aspartate 100 provides a ligand contact to Mg(2+). UDP-N-acetyl-alpha-D-glucosamine-binding residues include glycine 137, glutamate 152, asparagine 167, and asparagine 225. Asparagine 225 is a Mg(2+) binding site. The linker stretch occupies residues 228–248 (EQLADVEAIMRRRIAKKHMAN). Positions 249 to 455 (GVTIMNPEHV…WTKRKGLLKK (207 aa)) are N-acetyltransferase. Residues arginine 330 and lysine 348 each coordinate UDP-N-acetyl-alpha-D-glucosamine. The Proton acceptor role is filled by histidine 360. UDP-N-acetyl-alpha-D-glucosamine-binding residues include tyrosine 363 and asparagine 374. Residues 383–384 (NY), serine 402, cysteine 420, and arginine 437 contribute to the acetyl-CoA site.

It in the N-terminal section; belongs to the N-acetylglucosamine-1-phosphate uridyltransferase family. The protein in the C-terminal section; belongs to the transferase hexapeptide repeat family. As to quaternary structure, homotrimer. Mg(2+) serves as cofactor.

The protein localises to the cytoplasm. It carries out the reaction alpha-D-glucosamine 1-phosphate + acetyl-CoA = N-acetyl-alpha-D-glucosamine 1-phosphate + CoA + H(+). The enzyme catalyses N-acetyl-alpha-D-glucosamine 1-phosphate + UTP + H(+) = UDP-N-acetyl-alpha-D-glucosamine + diphosphate. Its pathway is nucleotide-sugar biosynthesis; UDP-N-acetyl-alpha-D-glucosamine biosynthesis; N-acetyl-alpha-D-glucosamine 1-phosphate from alpha-D-glucosamine 6-phosphate (route II): step 2/2. The protein operates within nucleotide-sugar biosynthesis; UDP-N-acetyl-alpha-D-glucosamine biosynthesis; UDP-N-acetyl-alpha-D-glucosamine from N-acetyl-alpha-D-glucosamine 1-phosphate: step 1/1. It participates in bacterial outer membrane biogenesis; LPS lipid A biosynthesis. Catalyzes the last two sequential reactions in the de novo biosynthetic pathway for UDP-N-acetylglucosamine (UDP-GlcNAc). The C-terminal domain catalyzes the transfer of acetyl group from acetyl coenzyme A to glucosamine-1-phosphate (GlcN-1-P) to produce N-acetylglucosamine-1-phosphate (GlcNAc-1-P), which is converted into UDP-GlcNAc by the transfer of uridine 5-monophosphate (from uridine 5-triphosphate), a reaction catalyzed by the N-terminal domain. In Alkaliphilus oremlandii (strain OhILAs) (Clostridium oremlandii (strain OhILAs)), this protein is Bifunctional protein GlmU.